The sequence spans 258 residues: Terpene cyclase macJ (258 aa).

Transmembrane regions (helical) follow at residues 29–49 (VPDG…ILMA), 58–78 (YAMP…YGFV), 83–103 (LLNQ…FYAI), 124–144 (IIVV…ATFI), 151–171 (VVFM…IAQL), 181–201 (SWGI…CFFW), and 220–240 (FLLL…VYVQ).

It belongs to the paxB family.

Its subcellular location is the membrane. It participates in secondary metabolite biosynthesis; terpenoid biosynthesis. Its function is as follows. Terpene cyclase; part of the gene cluster that mediates the biosynthesis of macrophorins, isoprenoid epoxycyclohexenones containing cyclized drimane moieties. The first step of the pathway is the synthesis of 6-methylsalicylic acid (6-MSA) by the polyketide synthase macA. 6-MSA is then converted to m-cresol by the decarboxylase macB. The cytochrome P450 monooxygenase macC then catalyzes the oxidation of m-cresol to toluquinol. Epoxidation of toluquinol is then performed by the short chain dehydrogenase macD, with the help of macE, and a further prenylation by macG leads to 7-deacetoxyyanuthone A. The next step is the hydroxylation of C-22 of 7-deacetoxyyanuthone A by the cytochrome P450 monooxygenase macH to yield 22-deacetylyanuthone A. O-Mevalon transferase macI then attaches mevalon to the hydroxyl group of 22-deacetylyanuthone A to produce yanuthone E. The terpene cyclase macJ catalyzes the cyclization of 22-deacetylyanuthone A to macrophorin A. MacJ is also able to catalyze cyclization of yanuthone E and 7-deacetoxyyanuthone A to their corresponding macrophorins. The macJ products can be further modified by macH and macJ, as well as by the FAD-dependent monooxygenase macF, to produce additional macrophorins, including 4'-oxomacrophorin A, 4'-oxomacrophorin D and 4'-oxomacrophorin E. In Penicillium terrestre, this protein is Terpene cyclase macJ.